The sequence spans 415 residues: MADTLKPEAPNPDTDAYAHESELDAHLQTKRMVINMGPSHPATHGTVRLKVELEGETIVKIDPEIGFLHRGFQKSCENVTWTQCLPYTDRLNYLSAMMNNFGFLNAVEKLIGLEIPERAQYIRVIGSELHRLTDHLTCVGATGLEMGGFAPFLLAMEFRELLHDRTAELTGARLTTSFGRVGGSNRDLPEGWIPRVHKTLDQGLALLDEMEGLLTNNRIFVDRTKGTGVISAEDAIEYGYTGPALRACGVDYDIRKTKPYWVYDRFDFDIPVGEHGDNYDRYLVRLEEMRQSIRILRQAMDTIPAGPIIVDDWRIALPPKPEVYGTIEGVMSHFKLVMEGIQVPAGEVYDATEASNGELGWYLVSDGRGRPYKVHVRAPGFPVLAAVPHIIEGKMLADLIPTFDTINMIGGEVEQ.

This sequence belongs to the complex I 49 kDa subunit family. NDH-1 is composed of 14 different subunits. Subunits NuoB, C, D, E, F, and G constitute the peripheral sector of the complex.

It localises to the cell inner membrane. It catalyses the reaction a quinone + NADH + 5 H(+)(in) = a quinol + NAD(+) + 4 H(+)(out). Functionally, NDH-1 shuttles electrons from NADH, via FMN and iron-sulfur (Fe-S) centers, to quinones in the respiratory chain. The immediate electron acceptor for the enzyme in this species is believed to be ubiquinone. Couples the redox reaction to proton translocation (for every two electrons transferred, four hydrogen ions are translocated across the cytoplasmic membrane), and thus conserves the redox energy in a proton gradient. The protein is NADH-quinone oxidoreductase subunit D of Myxococcus xanthus (strain DK1622).